Reading from the N-terminus, the 238-residue chain is Ribosomal RNA small subunit methyltransferase G (238 aa).

Residues G78, 129 to 130 (AE), and R148 contribute to the S-adenosyl-L-methionine site.

This sequence belongs to the methyltransferase superfamily. RNA methyltransferase RsmG family.

Its subcellular location is the cytoplasm. Specifically methylates the N7 position of a guanine in 16S rRNA. This chain is Ribosomal RNA small subunit methyltransferase G, found in Caldicellulosiruptor bescii (strain ATCC BAA-1888 / DSM 6725 / KCTC 15123 / Z-1320) (Anaerocellum thermophilum).